Consider the following 441-residue polypeptide: Amino-acid acetyltransferase (441 aa).

An N-acetyltransferase domain is found at 295 to 434 (EQVRRATIND…QALYNYQRRS (140 aa)).

This sequence belongs to the acetyltransferase family. ArgA subfamily. As to quaternary structure, homohexamer.

Its subcellular location is the cytoplasm. It catalyses the reaction L-glutamate + acetyl-CoA = N-acetyl-L-glutamate + CoA + H(+). Its pathway is amino-acid biosynthesis; L-arginine biosynthesis; N(2)-acetyl-L-ornithine from L-glutamate: step 1/4. The sequence is that of Amino-acid acetyltransferase from Pectobacterium atrosepticum (strain SCRI 1043 / ATCC BAA-672) (Erwinia carotovora subsp. atroseptica).